A 122-amino-acid polypeptide reads, in one-letter code: U19-hexatoxin-Hi1a (122 aa).

The N-terminal stretch at 1-18 (MNTMIGFIVLLVSATVLG) is a signal peptide. Residues 19–80 (DPELDALRKE…YENSNFREKR (62 aa)) constitute a propeptide that is removed on maturation. Cystine bridges form between C81-C96, C88-C101, and C95-C116.

In terms of tissue distribution, expressed by the venom gland.

The protein resides in the secreted. Its function is as follows. Probable ion channel inhibitor. The sequence is that of U19-hexatoxin-Hi1a from Hadronyche infensa (Fraser island funnel-web spider).